The following is a 381-amino-acid chain: Heterogeneous nuclear rnp K-like protein 2 (381 aa).

Positions 1 to 34 are disordered; the sequence is MSQFFEAATPVAIPTNNTNGGSSDAGSAATGGAP. A compositionally biased stretch (low complexity) spans 15-33; that stretch reads TNNTNGGSSDAGSAATGGA. 3 consecutive KH domains span residues 43–107, 156–221, and 258–326; these read TINH…IGDI, IGYV…LIEI, and NTRI…ESML. Residues 344-381 are disordered; that stretch reads LEAAEGDATVVTERSDSASFLEEKEEPQENHDNKEEQS. A phosphoserine mark is found at Ser-358, Ser-360, and Ser-362. Residues 370 to 381 are compositionally biased toward basic and acidic residues; that stretch reads PQENHDNKEEQS.

It belongs to the HEK2 family. As to quaternary structure, binds RNA. In terms of processing, phosphorylated by the plasma membrane-Anchored casein kinase YCK1. Phosphorylation at its C-terminus reduces its RNA-binding capacity.

Its subcellular location is the cytoplasm. The protein resides in the P-body. It localises to the nucleus. It is found in the chromosome. The protein localises to the telomere. RNA-binding protein involved in the correct localization of transcripts in the cell. RNA localization is a widespread mechanism for achieving localized protein synthesis. Required for the asymmetric localization to the daughter cell nucleus of the ASH1 transcript, coding for a specific repressor of transcription. Overexpression inhibits translation of the ASH1 transcript. Involved in the stability of transcripts, like the MTL1 mRNA. Involved in structural and functional organization of telomeric chromatin and regulates silencing at the HMR locus. This chain is Heterogeneous nuclear rnp K-like protein 2 (HEK2), found in Saccharomyces cerevisiae (strain YJM789) (Baker's yeast).